Consider the following 228-residue polypeptide: Phosphoglycolate phosphatase 1 (228 aa).

Aspartate 8 functions as the Nucleophile in the catalytic mechanism. 2 residues coordinate Mg(2+): aspartate 8 and aspartate 10. Lysine 149 contributes to the substrate binding site. Positions 172 and 176 each coordinate Mg(2+).

It belongs to the archaeal SPP-like hydrolase family. It depends on Mg(2+) as a cofactor.

The catalysed reaction is 2-phosphoglycolate + H2O = glycolate + phosphate. Functionally, catalyzes the dephosphorylation of 2-phosphoglycolate. This chain is Phosphoglycolate phosphatase 1, found in Saccharolobus solfataricus (strain ATCC 35092 / DSM 1617 / JCM 11322 / P2) (Sulfolobus solfataricus).